A 490-amino-acid polypeptide reads, in one-letter code: MTATETVRVRFCPSPTGTPHVGLVRTALFNWAYARHTGGTFVFRIEDTDAQRDSEESYLALLDALRWLGLDWDEGPEVGGPYGPYRQSQRAEIYRDVLARLLAAGEAYHAFSTPEEVEARHVAAGRNPKLGYDNFDRHLTDAQRAAYLAEGRQPVVRLRMPDDDLAWNDLVRGPVTFAAGSVPDFALTRASGDPLYTLVNPCDDALMKITHVLRGEDLLPSTPRQLALHQALIRIGVAERIPKFAHLPTVLGEGTKKLSKRDPQSNLFAHRDRGFIPEGLLNYLALLGWSIADDHDLFGLDEMVAAFDVADVNSSPARFDQKKADALNAEHIRMLDVGDFTVRLRDHLDTHGHHIALDEAAFAAAAELVQTRIVVLGDAWELLKFFNDDQYVIDPKAAAKELGPDGAAVLDAALAALTSVTDWTAPLIEAALKDALIEGLALKPRKAFSPIRVAATGTTVSPPLFESLELLGRDRSMQRLRAARQLVGHA.

The 'HIGH' region motif lies at 13–23; the sequence is PSPTGTPHVGL. The 'KMSKS' region signature appears at 257-261; the sequence is KLSKR. K260 contributes to the ATP binding site.

The protein belongs to the class-I aminoacyl-tRNA synthetase family. Glutamate--tRNA ligase type 1 subfamily. Monomer.

Its subcellular location is the cytoplasm. It catalyses the reaction tRNA(Glu) + L-glutamate + ATP = L-glutamyl-tRNA(Glu) + AMP + diphosphate. Catalyzes the attachment of glutamate to tRNA(Glu) in a two-step reaction: glutamate is first activated by ATP to form Glu-AMP and then transferred to the acceptor end of tRNA(Glu). The sequence is that of Glutamate--tRNA ligase from Mycobacterium tuberculosis (strain ATCC 25177 / H37Ra).